Reading from the N-terminus, the 135-residue chain is Large ribosomal subunit protein eL27x (135 aa).

This sequence belongs to the eukaryotic ribosomal protein eL27 family.

The chain is Large ribosomal subunit protein eL27x (RPL27C) from Arabidopsis thaliana (Mouse-ear cress).